Consider the following 310-residue polypeptide: UDP-N-acetylenolpyruvoylglucosamine reductase (310 aa).

One can recognise an FAD-binding PCMH-type domain in the interval R34–S213. R178 is a catalytic residue. The active-site Proton donor is the S227. E297 is an active-site residue.

It belongs to the MurB family. The cofactor is FAD.

It is found in the cytoplasm. The catalysed reaction is UDP-N-acetyl-alpha-D-muramate + NADP(+) = UDP-N-acetyl-3-O-(1-carboxyvinyl)-alpha-D-glucosamine + NADPH + H(+). Its pathway is cell wall biogenesis; peptidoglycan biosynthesis. Functionally, cell wall formation. The protein is UDP-N-acetylenolpyruvoylglucosamine reductase of Parvibaculum lavamentivorans (strain DS-1 / DSM 13023 / NCIMB 13966).